Consider the following 376-residue polypeptide: tRNA 2-selenouridine synthase (376 aa).

Residues 15 to 138 (FVAGKPLIDL…MRQYLIGVIE (124 aa)) form the Rhodanese domain. The active-site S-selanylcysteine intermediate is cysteine 98.

This sequence belongs to the SelU family. As to quaternary structure, monomer.

The catalysed reaction is 5-methylaminomethyl-2-thiouridine(34) in tRNA + selenophosphate + (2E)-geranyl diphosphate + H2O + H(+) = 5-methylaminomethyl-2-selenouridine(34) in tRNA + (2E)-thiogeraniol + phosphate + diphosphate. It carries out the reaction 5-methylaminomethyl-2-thiouridine(34) in tRNA + (2E)-geranyl diphosphate = 5-methylaminomethyl-S-(2E)-geranyl-thiouridine(34) in tRNA + diphosphate. It catalyses the reaction 5-methylaminomethyl-S-(2E)-geranyl-thiouridine(34) in tRNA + selenophosphate + H(+) = 5-methylaminomethyl-2-(Se-phospho)selenouridine(34) in tRNA + (2E)-thiogeraniol. The enzyme catalyses 5-methylaminomethyl-2-(Se-phospho)selenouridine(34) in tRNA + H2O = 5-methylaminomethyl-2-selenouridine(34) in tRNA + phosphate. Involved in the post-transcriptional modification of the uridine at the wobble position (U34) of tRNA(Lys), tRNA(Glu) and tRNA(Gln). Catalyzes the conversion of 2-thiouridine (S2U-RNA) to 2-selenouridine (Se2U-RNA). Acts in a two-step process involving geranylation of 2-thiouridine (S2U) to S-geranyl-2-thiouridine (geS2U) and subsequent selenation of the latter derivative to 2-selenouridine (Se2U) in the tRNA chain. In Shewanella oneidensis (strain ATCC 700550 / JCM 31522 / CIP 106686 / LMG 19005 / NCIMB 14063 / MR-1), this protein is tRNA 2-selenouridine synthase.